Here is a 131-residue protein sequence, read N- to C-terminus: Snaclec A13 (131 aa).

3 cysteine pairs are disulfide-bonded: Cys4–Cys15, Cys32–Cys125, and Cys100–Cys117. The region spanning 11–126 is the C-type lectin domain; sequence YEGHCYKVFN…CELAYHFICM (116 aa).

Belongs to the snaclec family. As to quaternary structure, heterodimer; disulfide-linked. Expressed by the venom gland.

Its subcellular location is the secreted. Interferes with one step of hemostasis (modulation of platelet aggregation, or coagulation cascade, for example). The sequence is that of Snaclec A13 from Macrovipera lebetinus (Levantine viper).